The following is a 255-amino-acid chain: MFHIGSLVVLCGLLAPTTALLEALPTPLGQTLPLAVTPALAPSPPDLAGSLTGALSNGLLSEGLLGILENLPLLDILKTRGNAPSGLLGSLLGKVTSLTPLLNNIIELKITNPQLLELGLVQSPDGHRLYVTIPLGMILNVKTSLVGSLLKLAVKLNITVELLAVTDEQKHVHLVVGNCTHSPGSLQIFLLDGLGSLPIQSFVDNLTGILNDVLPGLVQGKVCPLVNAVLSRLDVTLVHSIVNALIHGLQFVIKV.

A signal peptide spans 1–19 (MFHIGSLVVLCGLLAPTTA). Residues 87-92 (LLGSLL) form an important for surfactant activity and antibacterial properties region. N-linked (GlcNAc...) asparagine glycans are attached at residues Asn-157, Asn-178, and Asn-205. A disulfide bridge connects residues Cys-179 and Cys-223.

The protein belongs to the BPI/LBP/Plunc superfamily. Plunc family. Monomer. Interacts (via N-terminus) with SCNN1B, a subunit of the heterotrimeric epithelial sodium channel (ENaC); this inhibits proteolytic activation of ENaC. In terms of tissue distribution, expressed in trachea, and at lower levels in nasal epithelium.

The protein localises to the secreted. Functionally, lipid-binding protein which shows high specificity for the surfactant phospholipid dipalmitoylphosphatidylcholine (DPPC). Plays a role in the innate immune responses of the upper airways. Reduces the surface tension in secretions from airway epithelia and inhibits the formation of biofilm by pathogenic Gram-negative bacteria, such as P.aeruginosa and K.pneumoniae. Negatively regulates proteolytic cleavage of SCNN1G, an event that is required for activation of the epithelial sodium channel (ENaC), and thereby contributes to airway surface liquid homeostasis and proper clearance of mucus. Plays a role in the airway inflammatory response after exposure to irritants. May attract macrophages and neutrophils. In Bos taurus (Bovine), this protein is BPI fold-containing family A member 1 (BPIFA1).